A 641-amino-acid polypeptide reads, in one-letter code: MVASTPCPGPGPVPTQELLSTNFLEAHKLVVELLLPSYSSDVVYCDSETYTKPIPIFGNKSIVSTIGDYVLSNPNEDVSYQMVSSVLEKFPLLFHCTYKTNEEDKGIPLWKKLYNKRKFKLLNSLLVHNNKNWTPVPAIPFDRENICDASGRSVLMSEIMSTSTFQTICKNNTHYLFDMLNMERGKQGGSFLHFFASRKNSFTNFENEEMDSHVLSNIAKFICNEKEKLDSFIPANGKIPCPDKTNDEGYIPLEIAIMEDNYPALLYLVCRYGASWANTYGDHNESLKAFAIRNDAKDCLEIIEFISDHYSFNKNVTKEEFVKEKTVECVGCLYDIEDEKRCYKLPCGHFMHTFCLSNKCSKANFRCVKCFQTFDDTIFRKCPPTIQWKMGINQTTNHKEMDLFNRAFDTYLDFICSYNVKLDKKSKPKHKPENKKVEEELAKRTAEIEEAMKKKEEELTKRTAEIEEAIKKKEEELAKRTAEIEEAMKKKEEEELSKYNKIIEKGKRRLNEECVKLRDISTAAINMYKEKVRINGVLLKDSDQELAEAKERLRKILLLEEETKLDRFLFRPKRVEERIFLTKDDETLAFKLALEKKTEDIIAKKNNQKGSERRDGEYTITSHIEKLPQSTALASVCVLNE.

The RING-type; atypical zinc finger occupies 329 to 371 (CVGCLYDIEDEKRCYKLPCGHFMHTFCLSNKCSKANFRCVKCF).

The enzyme catalyses S-ubiquitinyl-[E2 ubiquitin-conjugating enzyme]-L-cysteine + [acceptor protein]-L-lysine = [E2 ubiquitin-conjugating enzyme]-L-cysteine + N(6)-ubiquitinyl-[acceptor protein]-L-lysine.. The protein operates within protein modification; protein ubiquitination. Functionally, probable E3 ubiquitin-protein ligase which accepts ubiquitin from an E2 ubiquitin-conjugating enzyme in the form of a thioester and then directly transfers the ubiquitin to targeted substrates. In White spot syndrome virus (isolate Shrimp/China/Tongan/1996) (WSSV), this protein is RING finger containing E3 ubiquitin-protein ligase WSV403.